Here is a 282-residue protein sequence, read N- to C-terminus: Shikimate dehydrogenase (NADP(+)) (282 aa).

Shikimate contacts are provided by residues 15–17 and Thr-62; that span reads SKS. Residue Lys-66 is the Proton acceptor of the active site. Shikimate-binding residues include Asn-87 and Asp-103. NADP(+) is bound by residues 127–131, 151–156, and Met-220; these read GAGGA and NRTHTK. Tyr-222 provides a ligand contact to shikimate. An NADP(+)-binding site is contributed by Gly-244.

This sequence belongs to the shikimate dehydrogenase family. As to quaternary structure, homodimer.

The enzyme catalyses shikimate + NADP(+) = 3-dehydroshikimate + NADPH + H(+). It functions in the pathway metabolic intermediate biosynthesis; chorismate biosynthesis; chorismate from D-erythrose 4-phosphate and phosphoenolpyruvate: step 4/7. In terms of biological role, involved in the biosynthesis of the chorismate, which leads to the biosynthesis of aromatic amino acids. Catalyzes the reversible NADPH linked reduction of 3-dehydroshikimate (DHSA) to yield shikimate (SA). The chain is Shikimate dehydrogenase (NADP(+)) from Shewanella baltica (strain OS185).